An 842-amino-acid polypeptide reads, in one-letter code: Molybdenum cofactor sulfurase (842 aa).

Lys236 is modified (N6-(pyridoxal phosphate)lysine). Residue Cys402 is part of the active site. The tract at residues 637–680 is disordered; it reads PGSQHGDAQRSSKARLQKHQITTDQESDVQEVHPGSGTTTDSTW. The region spanning 663–831 is the MOSC domain; it reads SDVQEVHPGS…AARGDVAYPT (169 aa).

Belongs to the class-V pyridoxal-phosphate-dependent aminotransferase family. MOCOS subfamily. The cofactor is pyridoxal 5'-phosphate.

The enzyme catalyses Mo-molybdopterin + L-cysteine + AH2 = thio-Mo-molybdopterin + L-alanine + A + H2O. Its pathway is cofactor biosynthesis; molybdopterin biosynthesis. Its function is as follows. Sulfurates the molybdenum cofactor. Sulfation of molybdenum is essential for xanthine dehydrogenase (XDH) and aldehyde oxidase (ADO) enzymes in which molybdenum cofactor is liganded by 1 oxygen and 1 sulfur atom in active form. The sequence is that of Molybdenum cofactor sulfurase from Pyricularia oryzae (strain 70-15 / ATCC MYA-4617 / FGSC 8958) (Rice blast fungus).